The sequence spans 350 residues: sn-1 oleoyl-lipid 12-desaturase (350 aa).

2 helical membrane-spanning segments follow: residues 41–61 (AWTQALLSVVMVGLGYWSLAI) and 64–84 (WFLLPIAWIFTGTALTGFFVI). The Histidine box-1 motif lies at 86–90 (HDCGH). A helical membrane pass occupies residues 98–118 (WVNDLVGHIFMMPLIYPFHSW). A Histidine box-2 motif is present at residues 122–126 (HNHHH). 2 consecutive transmembrane segments (helical) span residues 196–216 (VAVVVLFAAVAFPTLIATTGI) and 219–239 (FVKFWFVPWLGYHFWMSTFTI). The short motif at 287 to 291 (HHLST) is the Histidine box-3 element.

It belongs to the fatty acid desaturase type 2 family. Fe(2+) serves as cofactor.

Its subcellular location is the membrane. The enzyme catalyses a 1-[(9Z)-octadecenoyl]-2-acyl-glycerolipid + 2 reduced [2Fe-2S]-[ferredoxin] + O2 + 2 H(+) = a 1-[(9Z,12Z)-octadecdienoyl]-2-acyl-glycerolipid + 2 oxidized [2Fe-2S]-[ferredoxin] + 2 H2O. The protein operates within lipid metabolism; polyunsaturated fatty acid biosynthesis. Desaturase involved in fatty acid biosynthesis. Introduces a double bond at carbon 12 of oleoyl groups (18:1) attached to the sn-1 position of the glycerol moiety of membrane glycerolipids. This chain is sn-1 oleoyl-lipid 12-desaturase, found in Anabaena variabilis.